Reading from the N-terminus, the 210-residue chain is Glycerol-3-phosphate acyltransferase (210 aa).

Transmembrane regions (helical) follow at residues 1-21 (MLLS…FPAG), 53-73 (GPAL…VVAA), 87-107 (IAWL…LPVW), 122-142 (VLLA…LLLL), and 147-167 (IVSL…LILP).

The protein belongs to the PlsY family. As to quaternary structure, probably interacts with PlsX.

The protein resides in the cell inner membrane. The catalysed reaction is an acyl phosphate + sn-glycerol 3-phosphate = a 1-acyl-sn-glycero-3-phosphate + phosphate. Its pathway is lipid metabolism; phospholipid metabolism. In terms of biological role, catalyzes the transfer of an acyl group from acyl-phosphate (acyl-PO(4)) to glycerol-3-phosphate (G3P) to form lysophosphatidic acid (LPA). This enzyme utilizes acyl-phosphate as fatty acyl donor, but not acyl-CoA or acyl-ACP. The polypeptide is Glycerol-3-phosphate acyltransferase (Synechococcus elongatus (strain ATCC 33912 / PCC 7942 / FACHB-805) (Anacystis nidulans R2)).